The sequence spans 432 residues: Solute carrier family 38 member 8 (432 aa).

11 consecutive transmembrane segments (helical) span residues 29 to 49 (AVFI…PWAF), 59 to 79 (FLVA…LGYA), 103 to 123 (LCEI…LRVI), 144 to 164 (AAQN…LSAL), 175 to 195 (ILGT…YYLW), 215 to 237 (VFSV…SIYC), 253 to 273 (LSLL…FLTF), 292 to 312 (IIVA…IVLF), 345 to 365 (LPLT…LPDL), 368 to 388 (IISI…GLCL), and 409 to 429 (GILS…VAMV).

This sequence belongs to the amino acid/polyamine transporter 2 family. In terms of tissue distribution, expressed in neurons located in the gray matter. Highly expressed in thalamus, hypothalamus, amygdala and pons. Expressed in the CA3 area of hippocampus and in the Purkinje layer of the cerebellum (at protein level). Expressed in the eye.

It is found in the membrane. Its subcellular location is the cytoplasm. The protein localises to the cell cortex. The protein resides in the cell projection. It localises to the axon. The catalysed reaction is L-glutamine(out) = L-glutamine(in). The enzyme catalyses L-alanine(in) = L-alanine(out). It catalyses the reaction L-histidine(out) = L-histidine(in). It carries out the reaction L-aspartate(out) = L-aspartate(in). The catalysed reaction is L-arginine(in) = L-arginine(out). The enzyme catalyses L-leucine(in) = L-leucine(out). Electrogenic sodium-dependent amino acid transporter with a preference for L-glutamine, L-alanine, L-histidine, L-aspartate and L-arginine. May facilitate glutamine uptake in both excitatory and inhibitory neurons. The transport mechanism and stoichiometry remain to be elucidated. This Mus musculus (Mouse) protein is Solute carrier family 38 member 8.